Reading from the N-terminus, the 93-residue chain is MSRSLKKGPFADAHLLNKIEAQADSEKKQVIKTWSRRSTIFPSFIGYTIAVYDGRKHVPVFISDDMVGHKLGEFVPTRTFHGHGNDDKKTKAR.

Belongs to the universal ribosomal protein uS19 family.

In terms of biological role, protein S19 forms a complex with S13 that binds strongly to the 16S ribosomal RNA. This is Small ribosomal subunit protein uS19 from Latilactobacillus sakei subsp. sakei (strain 23K) (Lactobacillus sakei subsp. sakei).